The following is a 258-amino-acid chain: Ribosomal RNA small subunit methyltransferase A (258 aa).

Residues His13, Leu15, Gly40, Glu62, Asp87, and Asn108 each coordinate S-adenosyl-L-methionine.

The protein belongs to the class I-like SAM-binding methyltransferase superfamily. rRNA adenine N(6)-methyltransferase family. RsmA subfamily.

It is found in the cytoplasm. It carries out the reaction adenosine(1518)/adenosine(1519) in 16S rRNA + 4 S-adenosyl-L-methionine = N(6)-dimethyladenosine(1518)/N(6)-dimethyladenosine(1519) in 16S rRNA + 4 S-adenosyl-L-homocysteine + 4 H(+). Specifically dimethylates two adjacent adenosines (A1518 and A1519) in the loop of a conserved hairpin near the 3'-end of 16S rRNA in the 30S particle. May play a critical role in biogenesis of 30S subunits. This is Ribosomal RNA small subunit methyltransferase A from Sulfurihydrogenibium sp. (strain YO3AOP1).